The chain runs to 317 residues: Aspartate carbamoyltransferase catalytic subunit (317 aa).

The carbamoyl phosphate site is built by arginine 65 and threonine 66. Position 93 (lysine 93) interacts with L-aspartate. Residues arginine 115, histidine 145, and glutamine 148 each contribute to the carbamoyl phosphate site. The L-aspartate site is built by arginine 178 and arginine 233. Carbamoyl phosphate is bound by residues glycine 274 and proline 275.

The protein belongs to the aspartate/ornithine carbamoyltransferase superfamily. ATCase family. In terms of assembly, heterododecamer (2C3:3R2) of six catalytic PyrB chains organized as two trimers (C3), and six regulatory PyrI chains organized as three dimers (R2).

The catalysed reaction is carbamoyl phosphate + L-aspartate = N-carbamoyl-L-aspartate + phosphate + H(+). The protein operates within pyrimidine metabolism; UMP biosynthesis via de novo pathway; (S)-dihydroorotate from bicarbonate: step 2/3. In terms of biological role, catalyzes the condensation of carbamoyl phosphate and aspartate to form carbamoyl aspartate and inorganic phosphate, the committed step in the de novo pyrimidine nucleotide biosynthesis pathway. This is Aspartate carbamoyltransferase catalytic subunit from Bordetella parapertussis (strain 12822 / ATCC BAA-587 / NCTC 13253).